The chain runs to 558 residues: Serine palmitoyltransferase 2 (558 aa).

Over residues 33-42 the composition is skewed to acidic residues; that stretch reads HDDDEEEEEV. A disordered region spans residues 33–57; sequence HDDDEEEEEVKVDQGSEETTSSHDI. The residue at position 384 (K384) is an N6-(pyridoxal phosphate)lysine.

This sequence belongs to the class-II pyridoxal-phosphate-dependent aminotransferase family. In terms of assembly, heterodimer of sptl-1/sptl-2. The cofactor is pyridoxal 5'-phosphate.

The enzyme catalyses L-serine + hexadecanoyl-CoA + H(+) = 3-oxosphinganine + CO2 + CoA. It functions in the pathway lipid metabolism; sphingolipid metabolism. Functionally, component of the serine palmitoyltransferase (SPT) that catalyzes the first committed step in sphingolipid biosynthesis, which is the condensation of an acyl-CoA species and L-serine. The catalytic core is composed of a heterodimer of sptl-1 and sptl-2 or sptl-1 and sptl-3. Required for the specification of abicobasal polarity and development of the gut lumen. In Caenorhabditis elegans, this protein is Serine palmitoyltransferase 2 (sptl-2).